Reading from the N-terminus, the 397-residue chain is Tryptophan synthase beta chain (397 aa).

Residue K91 is modified to N6-(pyridoxal phosphate)lysine.

Belongs to the TrpB family. Tetramer of two alpha and two beta chains. Pyridoxal 5'-phosphate is required as a cofactor.

The catalysed reaction is (1S,2R)-1-C-(indol-3-yl)glycerol 3-phosphate + L-serine = D-glyceraldehyde 3-phosphate + L-tryptophan + H2O. It participates in amino-acid biosynthesis; L-tryptophan biosynthesis; L-tryptophan from chorismate: step 5/5. The beta subunit is responsible for the synthesis of L-tryptophan from indole and L-serine. The chain is Tryptophan synthase beta chain from Bacillus cereus (strain AH187).